The sequence spans 282 residues: Casein kinase II subunit beta-2 (282 aa).

Residues 1–92 form a disordered region; the sequence is MYRERGMVGS…ESEVSGSDGE (92 aa). Basic and acidic residues predominate over residues 13–28; the sequence is EVVDRKRINEIHDNRP. Composition is skewed to polar residues over residues 29-47 and 61-71; these read SHSMSQPVNGKGKVTSTSV and RSGSISKTNIS. Acidic residues predominate over residues 75–92; that stretch reads DISDTDSEESEVSGSDGE.

The protein belongs to the casein kinase 2 subunit beta family. Heterotetramer of two catalytic alpha subunits and two regulatory beta subunits. Interacts with CCA1. Phosphorylated by alpha subunit.

Its subcellular location is the cytoplasm. The protein resides in the cytosol. It is found in the nucleus. Functionally, plays a complex role in regulating the basal catalytic activity of the alpha subunit. The tetrameric holoenzyme CK2, composed of two alpha and two beta subunits, phosphorylates the transcription factor PIF1 after an exposure to light, resulting in a proteasome-dependent degradation of PIF1 and promotion of photomorphogenesis. CK2 phosphorylates translation initiation factors. May participate in the regulation of the initiation of translation. The sequence is that of Casein kinase II subunit beta-2 (CKB2) from Arabidopsis thaliana (Mouse-ear cress).